Reading from the N-terminus, the 716-residue chain is Pyruvate/proton symporter BtsT (716 aa).

Residues 1–5 are Cytoplasmic-facing; sequence MDTKK. The chain crosses the membrane as a helical span at residues 6-26; it reads IFKHIPWVILGIIGAFCLAVV. Topologically, residues 27–30 are periplasmic; the sequence is ALRR. Residues 31–51 form a helical membrane-spanning segment; the sequence is GEHISALWIVVASVSVYLVAY. Topologically, residues 52 to 88 are cytoplasmic; sequence RYYSLYIAQKVMKLDPTRATPAVINNDGLNYVPTNRY. A helical membrane pass occupies residues 89 to 109; the sequence is VLFGHHFAAIAGAGPLVGPVL. Residues 110–119 are Periplasmic-facing; that stretch reads AAQMGYLPGT. The chain crosses the membrane as a helical span at residues 120–140; the sequence is LWLLAGVVLAGAVQDFMVLFI. At 141–163 the chain is on the cytoplasmic side; sequence SSRRNGASLGEMIKEEMGPVPGT. A helical transmembrane segment spans residues 164 to 184; it reads IALFGCFLIMIIILAVLALIV. At 185–191 the chain is on the periplasmic side; sequence VKALAES. A helical transmembrane segment spans residues 192-212; that stretch reads PWGVFTVCSTVPIALFMGIYM. Residues 213-222 are Cytoplasmic-facing; the sequence is RFIRPGRVGE. The chain crosses the membrane as a helical span at residues 223–243; that stretch reads VSVIGIVLLVASIYFGGVIAH. Residues 244–257 lie on the Periplasmic side of the membrane; the sequence is DPYWGPALTFKDTT. A helical transmembrane segment spans residues 258 to 278; it reads ITFALIGYAFVSALLPVWLIL. Residues 279–282 are Cytoplasmic-facing; sequence APRD. The chain crosses the membrane as a helical span at residues 283 to 303; the sequence is YLATFLKIGVIVGLALGIVVL. Topologically, residues 304–326 are periplasmic; sequence NPELKMPAMTQYIDGTGPLWKGA. A helical membrane pass occupies residues 327-347; it reads LFPFLFITIACGAVSGFHALI. Over 348-374 the chain is Cytoplasmic; the sequence is SSGTTPKLLANETDARFIGYGAMLMES. Residues 375-395 form a helical membrane-spanning segment; it reads FVAIMALVAASIIEPGLYFAM. The Periplasmic segment spans residues 396–484; it reads NTPPAGLGIT…HVFHKVLPMA (89 aa). Residues 485–505 form a helical membrane-spanning segment; the sequence is DMGFWYHFGILFEALFILTAL. At 506–531 the chain is on the cytoplasmic side; that stretch reads DAGTRSGRFMLQDLLGNFIPFLKKTD. A helical membrane pass occupies residues 532–552; it reads SLVAGIIGTAGCVGLWGYLLY. Over 553–568 the chain is Periplasmic; sequence QGVVDPLGGVKSLWPL. The chain crosses the membrane as a helical span at residues 569 to 589; sequence FGISNQMLAAVALVLGTVVLI. The Cytoplasmic portion of the chain corresponds to 590–596; it reads KMKRTQY. A helical transmembrane segment spans residues 597-617; the sequence is IWVTVVPAVWLLICTTWALGL. At 618–668 the chain is on the periplasmic side; sequence KLFSTNPQMEGFFYMASQYKEKIANGTDLTAQQIANMNHIVVNNYTNAGLS. Residues 669–689 traverse the membrane as a helical segment; that stretch reads ILFLIVVYSIIFYGFKTWLAV. At 690 to 716 the chain is on the cytoplasmic side; the sequence is RNSDKRTDKETPYVPIPEGGVKISSHH. The disordered stretch occupies residues 696–716; sequence TDKETPYVPIPEGGVKISSHH.

It belongs to the peptide transporter carbon starvation (CstA) (TC 2.A.114) family. Interacts with BtsS and YpdA.

It is found in the cell inner membrane. It carries out the reaction pyruvate(out) + H(+)(out) = pyruvate(in) + H(+)(in). Its activity is regulated as follows. Transport is inhibited by the protonophores 2,4-dinitrophenol (DNP) and carbonyl cyanide m-chlorophenyl hydrazone (CCCP), but not by ionophores such as valinomycin, nonactin and nigericin. Transports pyruvate with a high affinity and specificity. The process is driven by the proton motive force. Under nutrient limiting conditions, mediates the uptake of pyruvate, thus enabling it to be used as a carbon source for the growth and survival. Part of a nutrient-sensing regulatory network composed of the two-component regulatory systems BtsS/BtsR and YpdA/YpdB, and their respective target proteins, BtsT and YhjX. The chain is Pyruvate/proton symporter BtsT from Escherichia coli (strain K12).